The sequence spans 316 residues: Dof zinc finger protein DOF5.7 (316 aa).

The tract at residues 1 to 42 (MSSHTNLPSPKPVPKPDHRISGTSQTKKPPSSSVAQDQQNLK) is disordered. Residues 21 to 42 (SGTSQTKKPPSSSVAQDQQNLK) are compositionally biased toward polar residues. A Dof-type zinc finger spans residues 41-95 (LKCPRCNSPNTKFCYYNNYSLSQPRHFCKSCRRYWTRGGALRNVPIGGGCRKTKK). Zn(2+)-binding residues include Cys-43, Cys-46, Cys-68, and Cys-71. 2 disordered regions span residues 92-111 (KTKK…SSSS) and 257-294 (NSSS…NTGG). The segment covering 101–111 (SSMNTLPSSSS) has biased composition (low complexity). Polar residues predominate over residues 257–291 (NSSSPSSPTKKGDNQTEWYFGNNSDNEGVISNNAN).

The protein resides in the nucleus. Functionally, transcription factor that binds specifically to a 5'-AA[AG]G-3' consensus core sequence. This Arabidopsis thaliana (Mouse-ear cress) protein is Dof zinc finger protein DOF5.7 (DOF5.7).